The sequence spans 427 residues: L-rhamnose isomerase (427 aa).

Mn(2+)-binding residues include His264, Asp296, and Asp298.

Belongs to the rhamnose isomerase family. The cofactor is Mn(2+).

It is found in the cytoplasm. The catalysed reaction is L-rhamnopyranose = L-rhamnulose. It participates in carbohydrate degradation; L-rhamnose degradation; glycerone phosphate from L-rhamnose: step 1/3. Catalyzes the interconversion of L-rhamnose and L-rhamnulose. This Lactiplantibacillus plantarum (strain ATCC BAA-793 / NCIMB 8826 / WCFS1) (Lactobacillus plantarum) protein is L-rhamnose isomerase.